An 837-amino-acid polypeptide reads, in one-letter code: ABC transporter A family member 8 (837 aa).

7 helical membrane passes run 29 to 49 (YFST…FYII), 244 to 264 (VVSL…FIFL), 303 to 323 (LIIC…FFLG), 326 to 346 (FLVL…MAFF), 356 to 376 (VAIG…LTFN), 393 to 413 (GAAF…SKVL), and 455 to 475 (LAYM…IEYA). Residues 516 to 750 (IRGLSKTFNK…YGEGYSVQVI (235 aa)) enclose the ABC transporter domain. Position 553 to 560 (553 to 560 (GSNGAGKS)) interacts with ATP.

It belongs to the ABC transporter superfamily. ABCA family.

It is found in the membrane. This is ABC transporter A family member 8 (abcA8) from Dictyostelium discoideum (Social amoeba).